The sequence spans 192 residues: Ion-translocating oxidoreductase complex subunit A (192 aa).

The next 6 helical transmembrane spans lie at 5–25 (LLLL…FLGL), 39–59 (IGMS…SYLV), 65–85 (LPFD…AVVV), 102–122 (ALGI…VALL), 134–154 (AIYG…FSAM), and 171–191 (AIAM…TGLV).

The protein belongs to the NqrDE/RnfAE family. In terms of assembly, the complex is composed of six subunits: RnfA, RnfB, RnfC, RnfD, RnfE and RnfG.

Its subcellular location is the cell inner membrane. Functionally, part of a membrane-bound complex that couples electron transfer with translocation of ions across the membrane. In Shewanella putrefaciens (strain CN-32 / ATCC BAA-453), this protein is Ion-translocating oxidoreductase complex subunit A.